Here is an 853-residue protein sequence, read N- to C-terminus: DNA mismatch repair protein MutS (853 aa).

614 to 621 contacts ATP; that stretch reads GPNMGGKS.

This sequence belongs to the DNA mismatch repair MutS family.

Functionally, this protein is involved in the repair of mismatches in DNA. It is possible that it carries out the mismatch recognition step. This protein has a weak ATPase activity. The polypeptide is DNA mismatch repair protein MutS (Cronobacter sakazakii (strain ATCC BAA-894) (Enterobacter sakazakii)).